Here is a 537-residue protein sequence, read N- to C-terminus: 2-succinyl-5-enolpyruvyl-6-hydroxy-3-cyclohexene-1-carboxylate synthase (537 aa).

This sequence belongs to the TPP enzyme family. MenD subfamily. In terms of assembly, homodimer. Mg(2+) serves as cofactor. The cofactor is Mn(2+). Requires thiamine diphosphate as cofactor.

The enzyme catalyses isochorismate + 2-oxoglutarate + H(+) = 5-enolpyruvoyl-6-hydroxy-2-succinyl-cyclohex-3-ene-1-carboxylate + CO2. Its pathway is quinol/quinone metabolism; 1,4-dihydroxy-2-naphthoate biosynthesis; 1,4-dihydroxy-2-naphthoate from chorismate: step 2/7. It participates in quinol/quinone metabolism; menaquinone biosynthesis. Functionally, catalyzes the thiamine diphosphate-dependent decarboxylation of 2-oxoglutarate and the subsequent addition of the resulting succinic semialdehyde-thiamine pyrophosphate anion to isochorismate to yield 2-succinyl-5-enolpyruvyl-6-hydroxy-3-cyclohexene-1-carboxylate (SEPHCHC). This chain is 2-succinyl-5-enolpyruvyl-6-hydroxy-3-cyclohexene-1-carboxylate synthase, found in Rhodococcus erythropolis (strain PR4 / NBRC 100887).